We begin with the raw amino-acid sequence, 89 residues long: Small ribosomal subunit protein uS15 (89 aa).

The protein belongs to the universal ribosomal protein uS15 family. As to quaternary structure, part of the 30S ribosomal subunit. Forms a bridge to the 50S subunit in the 70S ribosome, contacting the 23S rRNA.

In terms of biological role, one of the primary rRNA binding proteins, it binds directly to 16S rRNA where it helps nucleate assembly of the platform of the 30S subunit by binding and bridging several RNA helices of the 16S rRNA. Forms an intersubunit bridge (bridge B4) with the 23S rRNA of the 50S subunit in the ribosome. This Vibrio cholerae serotype O1 (strain ATCC 39541 / Classical Ogawa 395 / O395) protein is Small ribosomal subunit protein uS15.